The primary structure comprises 704 residues: Polyribonucleotide nucleotidyltransferase 4 (704 aa).

Mg(2+)-binding residues include D483 and D489. Positions 550–609 (PRVLKMKIHPDKIRDVIGSGGKTINRIIDETGVKIDIDNDGTIFIAAESQEAVEKAIIII) constitute a KH domain. The 69-residue stretch at 619 to 687 (GQNYTGKVIK…QQGKINLSRK (69 aa)) folds into the S1 motif domain.

Belongs to the polyribonucleotide nucleotidyltransferase family. Mg(2+) is required as a cofactor.

The protein localises to the cytoplasm. It catalyses the reaction RNA(n+1) + phosphate = RNA(n) + a ribonucleoside 5'-diphosphate. Involved in mRNA degradation. Catalyzes the phosphorolysis of single-stranded polyribonucleotides processively in the 3'- to 5'-direction. The chain is Polyribonucleotide nucleotidyltransferase 4 from Alkaliphilus metalliredigens (strain QYMF).